A 334-amino-acid chain; its full sequence is Hemin transport system permease protein HmuU (334 aa).

Transmembrane regions (helical) follow at residues 9–29 (LMLG…ANMG), 60–80 (LLAV…QGLF), 96–116 (AALC…LLAL), 117–137 (YSHM…IFTL), 149–169 (LLAG…LTYI), 191–211 (WSTL…GLLQ), 244–264 (AILI…GLVV), 278–298 (WLLP…DTLA), and 306–326 (EMPV…WLIL).

Belongs to the binding-protein-dependent transport system permease family. FecCD subfamily.

It is found in the cell inner membrane. Part of the binding-protein-dependent transport system for hemin; probably responsible for the translocation of the substrate across the membrane. The chain is Hemin transport system permease protein HmuU (hmuU) from Yersinia pestis.